A 284-amino-acid chain; its full sequence is uncharacterized protein (284 aa).

The signal sequence occupies residues 1–20 (MLHNIQSILQFLLFVSSVQA). The 84-residue stretch at 38-121 (CFEFKKNYWI…FTVNFFRNIC (84 aa)) folds into the Apple domain. Intrachain disulfides connect cysteine 38–cysteine 121, cysteine 63–cysteine 89, and cysteine 67–cysteine 77. Asparagine 256 carries N-linked (GlcNAc...) asparagine glycosylation. A helical membrane pass occupies residues 264–284 (SSTGLKFTTGLLIILVVFLFL).

Its subcellular location is the membrane. This is an uncharacterized protein from Caenorhabditis elegans.